A 152-amino-acid chain; its full sequence is uncharacterized protein (152 aa).

It belongs to the antirestriction protein family.

This is an uncharacterized protein from Escherichia coli (strain K12).